We begin with the raw amino-acid sequence, 323 residues long: Extracellular endo-alpha-(1-&gt;5)-L-arabinanase 1 (323 aa).

An N-terminal signal peptide occupies residues 1–32 (MKKKKTWKRFLHFSSAALAAGLIFTSAAPAEA). D44 functions as the Proton acceptor in the catalytic mechanism. A substrate-binding site is contributed by D44. Residue D107 coordinates Ca(2+). Substrate contacts are provided by residues G125 and 160 to 163 (NAID). E165 provides a ligand contact to Ca(2+). 180–182 (SFW) lines the substrate pocket. E215 acts as the Proton donor in catalysis. D287 contacts Ca(2+).

It belongs to the glycosyl hydrolase 43 family. Ca(2+) is required as a cofactor.

The protein resides in the secreted. The enzyme catalyses Endohydrolysis of (1-&gt;5)-alpha-arabinofuranosidic linkages in (1-&gt;5)-arabinans.. It functions in the pathway glycan metabolism; L-arabinan degradation. Involved in the degradation of arabinan and is a key enzyme in the complete degradation of the plant cell wall. Catalyzes the internal cleavage of alpha-(1-&gt;5)-L-arabinofuranosyl residues of linear 1,5-alpha-L-arabinan and of branched sugar beet arabinan. It displays no activity against heavily substituted arabinans or a range of other polysaccharides (larch wood arabinogalactan, wheat arabinoxylan and p-nitrophenyl-alpha-L-arabinofuranoside). The enzyme activity is progressively reduced as alpha-(1-&gt;5)-chains become shorter or more highly substituted. The chain is Extracellular endo-alpha-(1-&gt;5)-L-arabinanase 1 (abnA) from Bacillus subtilis (strain 168).